Reading from the N-terminus, the 126-residue chain is Large ribosomal subunit protein bL12 (126 aa).

This sequence belongs to the bacterial ribosomal protein bL12 family. In terms of assembly, homodimer. Part of the ribosomal stalk of the 50S ribosomal subunit. Forms a multimeric L10(L12)X complex, where L10 forms an elongated spine to which 2 to 4 L12 dimers bind in a sequential fashion. Binds GTP-bound translation factors.

Its function is as follows. Forms part of the ribosomal stalk which helps the ribosome interact with GTP-bound translation factors. Is thus essential for accurate translation. The protein is Large ribosomal subunit protein bL12 of Rhizobium meliloti (strain 1021) (Ensifer meliloti).